Consider the following 287-residue polypeptide: Phosphoribosylaminoimidazole-succinocarboxamide synthase (287 aa).

This sequence belongs to the SAICAR synthetase family.

The enzyme catalyses 5-amino-1-(5-phospho-D-ribosyl)imidazole-4-carboxylate + L-aspartate + ATP = (2S)-2-[5-amino-1-(5-phospho-beta-D-ribosyl)imidazole-4-carboxamido]succinate + ADP + phosphate + 2 H(+). It functions in the pathway purine metabolism; IMP biosynthesis via de novo pathway; 5-amino-1-(5-phospho-D-ribosyl)imidazole-4-carboxamide from 5-amino-1-(5-phospho-D-ribosyl)imidazole-4-carboxylate: step 1/2. This Neisseria meningitidis serogroup B (strain ATCC BAA-335 / MC58) protein is Phosphoribosylaminoimidazole-succinocarboxamide synthase.